Consider the following 218-residue polypeptide: ADP-sugar pyrophosphatase (218 aa).

The residue at position 1 (Met-1) is an N-acetylmethionine. Phosphoserine is present on Ser-10. Trp-27 is a substrate binding site. Residue Lys-41 forms a Glycyl lysine isopeptide (Lys-Gly) (interchain with G-Cter in SUMO2) linkage. Thr-44 carries the post-translational modification Phosphothreonine. Substrate contacts are provided by residues 45-46 (WE) and Arg-83. In terms of domain architecture, Nudix hydrolase spans 56–196 (KSADAVSVIP…EQHLTVDAKV (141 aa)). Residue Ala-95 coordinates Mg(2+). The short motif at 96 to 117 (GFIEDGESPEAAALRELEEETG) is the Nudix box element. Phe-97 contacts substrate. 2 residues coordinate Mg(2+): Glu-111 and Glu-115. A substrate-binding site is contributed by Asp-132. Glu-165 provides a ligand contact to Mg(2+). N6-acetyllysine is present on residues Lys-209 and Lys-217.

This sequence belongs to the Nudix hydrolase family. Homodimer. Interacts with PARG. Requires Mg(2+) as cofactor. Phosphorylation at Thr-44 is required for homodimer stability; dephosphorylation results in destabilization of the homodimer. Dephosphorylation at Thr-44 promotes the ATP-synthesis activity. As to expression, widely expressed. Most abundant in liver.

It localises to the nucleus. The enzyme catalyses D-ribose 5-phosphate + ATP + H(+) = ADP-D-ribose + diphosphate. It catalyses the reaction ADP-D-ribose + H2O = D-ribose 5-phosphate + AMP + 2 H(+). It carries out the reaction 8-oxo-dGDP + H2O = 8-oxo-dGMP + phosphate + H(+). Functionally, enzyme that can either act as an ADP-sugar pyrophosphatase in absence of diphosphate or catalyze the synthesis of ATP in presence of diphosphate. In absence of diphosphate, hydrolyzes with similar activities various modified nucleoside diphosphates such as ADP-ribose, ADP-mannose, ADP-glucose, 8-oxo-GDP and 8-oxo-dGDP. Can also hydrolyze other nucleotide sugars with low activity. In presence of diphosphate, mediates the synthesis of ATP in the nucleus by catalyzing the conversion of ADP-ribose to ATP and ribose 5-phosphate. Nuclear ATP synthesis takes place when dephosphorylated at Thr-44. Nuclear ATP generation is required for extensive chromatin remodeling events that are energy-consuming. Does not play a role in U8 snoRNA decapping activity. Binds U8 snoRNA. The polypeptide is ADP-sugar pyrophosphatase (Mus musculus (Mouse)).